Reading from the N-terminus, the 273-residue chain is Formamidopyrimidine-DNA glycosylase (273 aa).

The active-site Schiff-base intermediate with DNA is Pro2. Glu3 serves as the catalytic Proton donor. Lys59 functions as the Proton donor; for beta-elimination activity in the catalytic mechanism. The DNA site is built by His92 and Arg111. The segment at 239 to 273 (KVYGKTGEPCVICGTPIEKIKLNGRGTHFCPHCQK) adopts an FPG-type zinc-finger fold. The active-site Proton donor; for delta-elimination activity is the Arg263.

It belongs to the FPG family. As to quaternary structure, monomer. Zn(2+) is required as a cofactor.

The catalysed reaction is Hydrolysis of DNA containing ring-opened 7-methylguanine residues, releasing 2,6-diamino-4-hydroxy-5-(N-methyl)formamidopyrimidine.. The enzyme catalyses 2'-deoxyribonucleotide-(2'-deoxyribose 5'-phosphate)-2'-deoxyribonucleotide-DNA = a 3'-end 2'-deoxyribonucleotide-(2,3-dehydro-2,3-deoxyribose 5'-phosphate)-DNA + a 5'-end 5'-phospho-2'-deoxyribonucleoside-DNA + H(+). In terms of biological role, involved in base excision repair of DNA damaged by oxidation or by mutagenic agents. Acts as a DNA glycosylase that recognizes and removes damaged bases. Has a preference for oxidized purines, such as 7,8-dihydro-8-oxoguanine (8-oxoG). Has AP (apurinic/apyrimidinic) lyase activity and introduces nicks in the DNA strand. Cleaves the DNA backbone by beta-delta elimination to generate a single-strand break at the site of the removed base with both 3'- and 5'-phosphates. The protein is Formamidopyrimidine-DNA glycosylase of Listeria innocua serovar 6a (strain ATCC BAA-680 / CLIP 11262).